The chain runs to 363 residues: MSAIYNFCAGPAMLPAAVMKKAQQELLDWNGLGVSVMEVSHRGKEFIALTKQAEADLRELMHIPQNYHVLFMHGGGRGQFSAVVNNFLGNQGRALYLVSGQWSSAALAEAQKLAGDTQIDSLNIVEKHNGLNAVVLPELHKIDADYRYVHYCPNETVDGIEIFDELDSPWPIVADLSSTIMSREIDVSRYGLIYAGAQKNIGPSGLSIVIVRDDMLKLPSLTQSSIMDYRLAVEHDSMFNTPPTFAWYLAAEVFAWLKSLGGVASIAKINQQKAQMLYACIDANPFYKNGVVAANRSQMNVTFQLADESLDGAFLKEAEAAGLVALKGHRIVGGMRASLYNAMPLEGVAALVSFMNEFAAKHS.

Residue Arg-42 coordinates L-glutamate. Pyridoxal 5'-phosphate contacts are provided by residues 76–77 (GR), Trp-102, Thr-156, Asp-175, and Gln-198. Lys-199 is subject to N6-(pyridoxal phosphate)lysine. A pyridoxal 5'-phosphate-binding site is contributed by 240–241 (NT).

This sequence belongs to the class-V pyridoxal-phosphate-dependent aminotransferase family. SerC subfamily. Homodimer. It depends on pyridoxal 5'-phosphate as a cofactor.

It localises to the cytoplasm. It catalyses the reaction O-phospho-L-serine + 2-oxoglutarate = 3-phosphooxypyruvate + L-glutamate. The enzyme catalyses 4-(phosphooxy)-L-threonine + 2-oxoglutarate = (R)-3-hydroxy-2-oxo-4-phosphooxybutanoate + L-glutamate. The protein operates within amino-acid biosynthesis; L-serine biosynthesis; L-serine from 3-phospho-D-glycerate: step 2/3. It participates in cofactor biosynthesis; pyridoxine 5'-phosphate biosynthesis; pyridoxine 5'-phosphate from D-erythrose 4-phosphate: step 3/5. Catalyzes the reversible conversion of 3-phosphohydroxypyruvate to phosphoserine and of 3-hydroxy-2-oxo-4-phosphonooxybutanoate to phosphohydroxythreonine. The protein is Phosphoserine aminotransferase of Shewanella sp. (strain ANA-3).